The following is a 44-amino-acid chain: Unknown protein 1 (44 aa).

The chain is Unknown protein 1 from Lonomia obliqua (Moth).